The following is a 236-amino-acid chain: Purine nucleoside phosphorylase DeoD-type 2 (236 aa).

Residue His5 coordinates a purine D-ribonucleoside. Phosphate-binding positions include Gly21, Arg25, Arg44, and 88–91; that span reads RVGS. Residues 180–182 and 204–205 contribute to the a purine D-ribonucleoside site; these read DME and SD. The Proton donor role is filled by Asp205.

The protein belongs to the PNP/UDP phosphorylase family. As to quaternary structure, homohexamer; trimer of homodimers.

The catalysed reaction is a purine D-ribonucleoside + phosphate = a purine nucleobase + alpha-D-ribose 1-phosphate. The enzyme catalyses a purine 2'-deoxy-D-ribonucleoside + phosphate = a purine nucleobase + 2-deoxy-alpha-D-ribose 1-phosphate. Functionally, catalyzes the reversible phosphorolytic breakdown of the N-glycosidic bond in the beta-(deoxy)ribonucleoside molecules, with the formation of the corresponding free purine bases and pentose-1-phosphate. This is Purine nucleoside phosphorylase DeoD-type 2 from Vibrio vulnificus (strain CMCP6).